The following is a 333-amino-acid chain: Putative F-box protein At4g11580 (333 aa).

Positions 11-58 (VSEWADLNKDILELIFNKLDVMDITMGASRVCISWFLASHNKTLWNTV) constitute an F-box domain.

This is Putative F-box protein At4g11580 from Arabidopsis thaliana (Mouse-ear cress).